Consider the following 63-residue polypeptide: Hyphancin-3E (63 aa).

The N-terminal stretch at 1–22 (MNFSRILFFVFTCFVALASVSG) is a signal peptide. Positions 23–26 (APEP) are cleaved as a propeptide — removed by a dipeptidylpeptidase. L61 carries the leucine amide modification.

It belongs to the cecropin family.

The protein resides in the secreted. Its function is as follows. Has antibacterial activity. The chain is Hyphancin-3E from Hyphantria cunea (Fall webworm moth).